The sequence spans 1014 residues: 2-oxoglutarate dehydrogenase, mitochondrial (1014 aa).

The N-terminal 30 residues, 1 to 30 (MLRFVSSQTCRYSSRGLLKTSLLKNASTVK), are a transit peptide targeting the mitochondrion. Positions 306, 406, 439, and 441 each coordinate thiamine diphosphate. Mg(2+) contacts are provided by Asp-406, Asn-439, and Ile-441.

This sequence belongs to the alpha-ketoglutarate dehydrogenase family. In terms of assembly, component of the 2-oxoglutarate dehydrogenase complex (OGDC), also called alpha-ketoglutarate dehydrogenase (KGDH) complex. The copmplex is composed of the catalytic subunits OGDH (2-oxoglutarate dehydrogenase KGD1; also called E1 subunit), DLST (dihydrolipoamide succinyltransferase KGD2; also called E2 subunit) and DLD (dihydrolipoamide dehydrogenase LPD1; also called E3 subunit), and the assembly factor KGD4. Thiamine diphosphate serves as cofactor. It depends on Mg(2+) as a cofactor.

The protein resides in the mitochondrion. Its subcellular location is the mitochondrion matrix. It localises to the mitochondrion nucleoid. The enzyme catalyses N(6)-[(R)-lipoyl]-L-lysyl-[protein] + 2-oxoglutarate + H(+) = N(6)-[(R)-S(8)-succinyldihydrolipoyl]-L-lysyl-[protein] + CO2. Its activity is regulated as follows. Catabolite repressed. In terms of biological role, the 2-oxoglutarate dehydrogenase complex catalyzes the overall conversion of 2-oxoglutarate to succinyl-CoA and CO(2). It contains multiple copies of three enzymatic components: 2-oxoglutarate dehydrogenase (E1), dihydrolipoamide succinyltransferase (E2) and lipoamide dehydrogenase (E3). This Saccharomyces cerevisiae (strain ATCC 204508 / S288c) (Baker's yeast) protein is 2-oxoglutarate dehydrogenase, mitochondrial (KGD1).